We begin with the raw amino-acid sequence, 90 residues long: Small ribosomal subunit protein bS16 (90 aa).

It belongs to the bacterial ribosomal protein bS16 family.

This is Small ribosomal subunit protein bS16 from Streptococcus pneumoniae serotype 19F (strain G54).